Consider the following 312-residue polypeptide: UDP-N-acetylenolpyruvoylglucosamine reductase (312 aa).

Residues 30–202 (RVGGPAQWLA…VAAQFQLEPG (173 aa)) form the FAD-binding PCMH-type domain. The active site involves Arg181. The active-site Proton donor is Ser232. Glu302 is a catalytic residue.

The protein belongs to the MurB family. FAD is required as a cofactor.

Its subcellular location is the cytoplasm. The catalysed reaction is UDP-N-acetyl-alpha-D-muramate + NADP(+) = UDP-N-acetyl-3-O-(1-carboxyvinyl)-alpha-D-glucosamine + NADPH + H(+). It participates in cell wall biogenesis; peptidoglycan biosynthesis. Cell wall formation. The polypeptide is UDP-N-acetylenolpyruvoylglucosamine reductase (Synechococcus sp. (strain CC9311)).